Reading from the N-terminus, the 160-residue chain is Nucleotide-binding protein VS_1405 (160 aa).

The protein belongs to the YajQ family.

Its function is as follows. Nucleotide-binding protein. In Vibrio atlanticus (strain LGP32) (Vibrio splendidus (strain Mel32)), this protein is Nucleotide-binding protein VS_1405.